The following is a 780-amino-acid chain: MAAESSLRVATPTICNLNGSQRRPTTLSPLRFMGFSPRPSHSLTSSSLSHFFGSTRINSNSSSISRQHAPRRNFSVFAMSGDDAKRSVPLKDYRNIGIMAHIDAGKTTTTERILYYTGRNYKIGEVHEGTATMDWMEQEQERGITITSAATTTFWNKHRINIIDTPGHVDFTLEVERALRVLDGAICLFDSVAGVEPQSETVWRQADKYGVPRICFVNKMDRLGANFYRTRDMIVTNLGAKPLVIQLPIGSEDNFKGVIDLVRNKAIVWSGEELGAKFDIVDVPEDLQEQAQEYRAQMIETIVEFDDQAMENYLEGIEPDEETIKKLIRKGTISASFVPVMCGSAFKNKGVQPLLDAVVDYLPSPLDLPAMKGSDPENPEETIERVASDDEPFAGLAFKIMSDPFVGSLTFVRVYAGKLSAGSYVLNANKGKKERIGRLLEMHANSREDVKVALAGDIIALAGLKDTITGETLCDPDNPIVLERMDFPDPVIKVAIEPKTKADVDKMATGLIKLAQEDPSFHFSRDEEINQTVIEGMGELHLEIIVDRLKREFKVEANVGAPQVNYRESISKTAEVKYVHKKQSGGQGQFADITVRFEPMDPGSGYEFKSEIKGGAVPKEYIPGVMKGLEECMSNGVLAGFPVVDVRAVLTDGSYHDVDSSVLAFQLAARGAFREGIRKAGPRMLEPIMKVEVVTPEEHLGDVIGDLNSRRGQINSFGDKPGGLKVVDALVPLAEMFQYVSTLRGMTKGRASYTMQLAMFDVVPQHIQNQLATKEQEVAA.

Residues 1–79 (MAAESSLRVA…PRRNFSVFAM (79 aa)) constitute a chloroplast transit peptide. The region spanning 91–366 (KDYRNIGIMA…AVVDYLPSPL (276 aa)) is the tr-type G domain. GTP is bound by residues 100-107 (AHIDAGKT), 164-168 (DTPGH), and 218-221 (NKMD).

Belongs to the TRAFAC class translation factor GTPase superfamily. Classic translation factor GTPase family. EF-G/EF-2 subfamily.

It is found in the plastid. Its subcellular location is the chloroplast. Its pathway is protein biosynthesis; polypeptide chain elongation. In terms of biological role, chloroplast-localized elongation factor EF-G involved in protein synthesis in plastids. Catalyzes the GTP-dependent ribosomal translocation step during translation elongation. During this step, the ribosome changes from the pre-translocational (PRE) to the post-translocational (POST) state as the newly formed A-site-bound peptidyl-tRNA and P-site-bound deacylated tRNA move to the P and E sites, respectively. Catalyzes the coordinated movement of the two tRNA molecules, the mRNA and conformational changes in the ribosome. The sequence is that of Elongation factor G-2, chloroplastic (fusA2) from Glycine max (Soybean).